Reading from the N-terminus, the 116-residue chain is Protein Rev (116 aa).

A phosphoserine; by host CK2 mark is found at Ser5 and Ser8. The interval 18–26 (IIKILYQSN) is homomultimerization. The segment at 24–49 (QSNPHPSPEGTRQARRNRRRRWRERQ) is disordered. Residues 34-50 (TRQARRNRRRRWRERQR) carry the Nuclear localization signal and RNA-binding (RRE) motif. Residues 36-47 (QARRNRRRRWRE) are compositionally biased toward basic residues. Residues 73-84 (LQLPPLDRLTLD) carry the Nuclear export signal and binding to XPO1 motif. Ser92 and Ser99 each carry phosphoserine; by host.

Belongs to the HIV-1 REV protein family. As to quaternary structure, homomultimer; when bound to the RRE. Multimeric assembly is essential for activity and may involve XPO1. Binds to human KPNB1, XPO1, TNPO1, RANBP5 and IPO7. Interacts with the viral Integrase. Interacts with human KHDRBS1. Interacts with human NAP1; this interaction decreases Rev multimerization and stimulates its activity. Interacts with human DEAD-box helicases DDX3 and DDX24; these interactions may serve for viral RNA export to the cytoplasm and packaging, respectively. Interacts with human PSIP1; this interaction may inhibit HIV-1 DNA integration by promoting dissociation of the Integrase-LEDGF/p75 complex. Post-translationally, asymmetrically arginine dimethylated at one site by host PRMT6. Methylation impairs the RNA-binding activity and export of viral RNA from the nucleus to the cytoplasm. In terms of processing, phosphorylated by protein kinase CK2. Presence of, and maybe binding to the N-terminus of the regulatory beta subunit of CK2 is necessary for CK2-mediated Rev's phosphorylation.

It is found in the host nucleus. The protein resides in the host nucleolus. It localises to the host cytoplasm. Functionally, escorts unspliced or incompletely spliced viral pre-mRNAs (late transcripts) out of the nucleus of infected cells. These pre-mRNAs carry a recognition sequence called Rev responsive element (RRE) located in the env gene, that is not present in fully spliced viral mRNAs (early transcripts). This function is essential since most viral proteins are translated from unspliced or partially spliced pre-mRNAs which cannot exit the nucleus by the pathway used by fully processed cellular mRNAs. Rev itself is translated from a fully spliced mRNA that readily exits the nucleus. Rev's nuclear localization signal (NLS) binds directly to KPNB1/Importin beta-1 without previous binding to KPNA1/Importin alpha-1. KPNB1 binds to the GDP bound form of RAN (Ran-GDP) and targets Rev to the nucleus. In the nucleus, the conversion from Ran-GDP to Ran-GTP dissociates Rev from KPNB1 and allows Rev's binding to the RRE in viral pre-mRNAs. Rev multimerization on the RRE via cooperative assembly exposes its nuclear export signal (NES) to the surface. Rev can then form a complex with XPO1/CRM1 and Ran-GTP, leading to nuclear export of the complex. Conversion from Ran-GTP to Ran-GDP mediates dissociation of the Rev/RRE/XPO1/RAN complex, so that Rev can return to the nucleus for a subsequent round of export. Beside KPNB1, also seems to interact with TNPO1/Transportin-1, RANBP5/IPO5 and IPO7/RANBP7 for nuclear import. The nucleoporin-like HRB/RIP is an essential cofactor that probably indirectly interacts with Rev to release HIV RNAs from the perinuclear region to the cytoplasm. The chain is Protein Rev from Human immunodeficiency virus type 1 group M subtype B (isolate SF33) (HIV-1).